The following is a 342-amino-acid chain: Glucan endo-1,3-beta-glucosidase (342 aa).

Positions 1 to 26 (MLASSPMLLFLLSLLMAYNFDTTAGQ) are cleaved as a signal peptide. The Proton donor role is filled by Glu119. Glu261 serves as the catalytic Nucleophile.

Belongs to the glycosyl hydrolase 17 family. Post-translationally, the N-terminus is blocked.

The protein resides in the vacuole. It catalyses the reaction Hydrolysis of (1-&gt;3)-beta-D-glucosidic linkages in (1-&gt;3)-beta-D-glucans.. In terms of biological role, is thought to be an important plant defense-related product against fungal pathogens. Accumulation of the glucanase can be detected as early as 4 hours after inoculation. This chain is Glucan endo-1,3-beta-glucosidase (BGL), found in Brassica campestris (Field mustard).